A 495-amino-acid polypeptide reads, in one-letter code: Steroid 21-hydroxylase (495 aa).

Positions 92 and 121 each coordinate heme b. R234 contacts 17alpha-hydroxyprogesterone. R234 lines the progesterone pocket. H366, R427, and C429 together coordinate heme b.

This sequence belongs to the cytochrome P450 family. Heme b is required as a cofactor.

The protein resides in the endoplasmic reticulum membrane. Its subcellular location is the microsome membrane. The catalysed reaction is progesterone + reduced [NADPH--hemoprotein reductase] + O2 = 21-hydroxyprogesterone + oxidized [NADPH--hemoprotein reductase] + H2O + H(+). It carries out the reaction 17alpha-hydroxyprogesterone + reduced [NADPH--hemoprotein reductase] + O2 = 11-deoxycortisol + oxidized [NADPH--hemoprotein reductase] + H2O + H(+). Functionally, a cytochrome P450 monooxygenase that plays a major role in adrenal steroidogenesis. Catalyzes the hydroxylation at C-21 of progesterone and 17alpha-hydroxyprogesterone to respectively form 11-deoxycorticosterone and 11-deoxycortisol, intermediate metabolites in the biosynthetic pathway of mineralocorticoids and glucocorticoids. Mechanistically, uses molecular oxygen inserting one oxygen atom into a substrate, and reducing the second into a water molecule, with two electrons provided by NADPH via cytochrome P450 reductase (CPR; NADPH-ferrihemoprotein reductase). In Homo sapiens (Human), this protein is Steroid 21-hydroxylase (CYP21A2).